The sequence spans 219 residues: Chloramphenicol acetyltransferase (219 aa).

Catalysis depends on His190, which acts as the Proton acceptor.

This sequence belongs to the chloramphenicol acetyltransferase family. Homotrimer.

It catalyses the reaction chloramphenicol + acetyl-CoA = chloramphenicol 3-acetate + CoA. Its function is as follows. This enzyme is an effector of chloramphenicol resistance in bacteria. This is Chloramphenicol acetyltransferase (catQ) from Clostridium perfringens.